The chain runs to 278 residues: Aquaporin NIP3-3 (278 aa).

Helical transmembrane passes span 70–90 (VSAE…TIIM) and 99–119 (TLLG…LSLI). Positions 127–129 (NPA) match the NPA 1 motif. The next 3 helical transmembrane spans lie at 141-163 (PSAH…SFAV), 185-205 (AFFV…ALAT), and 213-233 (LIAV…GPST). The NPA 2 signature appears at 238 to 240 (NPA). The helical transmembrane segment at 255–275 (IWVYLVATPLGAIAGTGAYVA) threads the bilayer.

This sequence belongs to the MIP/aquaporin (TC 1.A.8) family. NIP (TC 1.A.8.12) subfamily. As to expression, expressed in leaves and at lower levels in roots and anthers.

Its subcellular location is the membrane. Functionally, aquaporins facilitate the transport of water and small neutral solutes across cell membranes. In Oryza sativa subsp. japonica (Rice), this protein is Aquaporin NIP3-3 (NIP3-3).